A 381-amino-acid polypeptide reads, in one-letter code: DnaJ-related protein spj1 (381 aa).

Positions 5–74 constitute a J domain; the sequence is NFSQKQILGV…RKIYDAYGEE (70 aa). The interval 72–93 is disordered; sequence GEEGLNGQPGGPGGGPGEGFPG. Over residues 78 to 93 the composition is skewed to gly residues; the sequence is GQPGGPGGGPGEGFPG. The CR-type zinc-finger motif lies at 138–225; it reads GGSFTLEIPV…CKGERVAEVV (88 aa). CXXCXGXG motif repeat units follow at residues 151–158, 172–179, 199–206, and 213–220; these read CSVCSGQG, CPVCGGSG, CNACNGNG, and CPRCKGER. Residues 378-381 carry the Prevents secretion from ER motif; the sequence is FDEL.

The protein resides in the endoplasmic reticulum. This Schizosaccharomyces pombe (strain 972 / ATCC 24843) (Fission yeast) protein is DnaJ-related protein spj1 (spj1).